The following is a 345-amino-acid chain: Phosphoribosylformylglycinamidine cyclo-ligase (345 aa).

It belongs to the AIR synthase family.

The protein localises to the cytoplasm. It carries out the reaction 2-formamido-N(1)-(5-O-phospho-beta-D-ribosyl)acetamidine + ATP = 5-amino-1-(5-phospho-beta-D-ribosyl)imidazole + ADP + phosphate + H(+). It functions in the pathway purine metabolism; IMP biosynthesis via de novo pathway; 5-amino-1-(5-phospho-D-ribosyl)imidazole from N(2)-formyl-N(1)-(5-phospho-D-ribosyl)glycinamide: step 2/2. This Escherichia coli O127:H6 (strain E2348/69 / EPEC) protein is Phosphoribosylformylglycinamidine cyclo-ligase.